Here is a 399-residue protein sequence, read N- to C-terminus: Fructose-1,6-bisphosphate aldolase/phosphatase (399 aa).

The Proton acceptor; for FBP phosphatase activity role is filled by Asp-11. Asp-11, His-18, Asp-52, and Asp-53 together coordinate Mg(2+). Residue His-18 participates in beta-D-fructose 1,6-bisphosphate binding. A dihydroxyacetone phosphate-binding site is contributed by His-18. Tyr-91 lines the beta-D-fructose 1,6-bisphosphate pocket. Residue Gln-95 coordinates Mg(2+). 104-105 (GN) contacts beta-D-fructose 1,6-bisphosphate. Asp-132 is a Mg(2+) binding site. Lys-133 is a beta-D-fructose 1,6-bisphosphate binding site. Lys-133 contributes to the dihydroxyacetone phosphate binding site. The active-site Proton donor/acceptor; for FBP aldolase activity is the Tyr-229. Mg(2+)-binding residues include Lys-232, Asp-233, and Asp-234. Lys-232 (schiff-base intermediate with DHAP; for FBP aldolase activity) is an active-site residue. Beta-D-fructose 1,6-bisphosphate is bound by residues 242–243 (QS), Arg-266, Asp-297, and Tyr-358. Dihydroxyacetone phosphate-binding residues include Arg-266 and Asp-297.

Belongs to the FBP aldolase/phosphatase family. As to quaternary structure, homooctamer; dimer of tetramers. It depends on Mg(2+) as a cofactor.

The enzyme catalyses beta-D-fructose 1,6-bisphosphate + H2O = beta-D-fructose 6-phosphate + phosphate. It catalyses the reaction beta-D-fructose 1,6-bisphosphate = D-glyceraldehyde 3-phosphate + dihydroxyacetone phosphate. The protein operates within carbohydrate biosynthesis; gluconeogenesis. Functionally, catalyzes two subsequent steps in gluconeogenesis: the aldol condensation of dihydroxyacetone phosphate (DHAP) and glyceraldehyde-3-phosphate (GA3P) to fructose-1,6-bisphosphate (FBP), and the dephosphorylation of FBP to fructose-6-phosphate (F6P). The protein is Fructose-1,6-bisphosphate aldolase/phosphatase of Pyrobaculum neutrophilum (strain DSM 2338 / JCM 9278 / NBRC 100436 / V24Sta) (Thermoproteus neutrophilus).